A 933-amino-acid polypeptide reads, in one-letter code: Progesterone receptor (933 aa).

The interval 1-164 (MTELKAKGPR…PATQRVLSPL (164 aa)) is AF3; mediates transcriptional activation. Residues 1–256 (MTELKAKGPR…AAAGGGAAAV (256 aa)) are disordered. Positions 1–566 (MTELKAKGPR…YSFESLPQKI (566 aa)) are modulating, Pro-Rich. Phosphoserine is present on S20. Short sequence motifs (LXXL motif) lie at residues 55–59 (LDGLL) and 115–119 (LDTLL). Residues S130 and S162 each carry the phosphoserine modification. A mediates transcriptional transrepression region spans residues 165–305 (MSRSGGKAGD…LATTTMDFIH (141 aa)). Residues 183 to 187 (KVLPR) carry the Nuclear localization signal motif. Residues S190 and S213 each carry the phosphoserine modification. Residues 220–231 (EVEEEDGSESED) show a composition bias toward acidic residues. S294 is modified (phosphoserine; by MAPK1). Residues 332-380 (GAGAASAFAPPRSSPSASSTPVAVGDFPDCAYPPDADPKDDAYPLYGDF) form a disordered region. Residues 335-350 (AASAFAPPRSSPSASS) show a composition bias toward low complexity. S345 is modified (phosphoserine; by MAPK). K388 participates in a covalent cross-link: Glycyl lysine isopeptide (Lys-Gly) (interchain with G-Cter in SUMO); alternate. K388 is covalently cross-linked (Glycyl lysine isopeptide (Lys-Gly) (interchain with G-Cter in ubiquitin); alternate). S400 is modified (phosphoserine; by CDK2). The interval 415-454 (PDFPLGPPPPLPPRAPPSRPGEAAVTAAPASASVSSSSSS) is disordered. Pro residues predominate over residues 418–433 (PLGPPPPLPPRAPPSR). Positions 434 to 454 (PGEAAVTAAPASASVSSSSSS) are enriched in low complexity. Residues 456–546 (STLECILYKA…VYPPYLNYLR (91 aa)) form an AF1; mediates transcriptional activation region. A Glycyl lysine isopeptide (Lys-Gly) (interchain with G-Cter in SUMO) cross-link involves residue K531. 2 consecutive NR C4-type zinc fingers follow at residues 567-587 (CLIC…CGSC) and 603-627 (CAGR…LRKC). A DNA-binding region (nuclear receptor) is located at residues 567–639 (CLICGDEASG…AGMVLGGRKF (73 aa)). Residue S676 is modified to Phosphoserine. The 235-residue stretch at 679–913 (QDIQFFPPLI…EFPEMMSEVI (235 aa)) folds into the NR LBD domain. The tract at residues 687–933 (LINLLVSIEP…MVKPLLFHKK (247 aa)) is AF2; mediates transcriptional activation. Residue R766 participates in progesterone binding.

This sequence belongs to the nuclear hormone receptor family. As to quaternary structure, interacts with SMARD1 and UNC45A. Interacts with CUEDC2; the interaction promotes ubiquitination, decreases sumoylation, and represses transcriptional activity. Interacts with PIAS3; the interaction promotes sumoylation of PR in a hormone-dependent manner, inhibits DNA-binding, and alters nuclear export. Interacts with SP1; the interaction requires ligand-induced phosphorylation on Ser-345 by ERK1/2-MAPK. Interacts with PRMT2. Interacts with NCOA2 and NCOA1. Interacts with KLF9. Interacts with GTF2B. In terms of processing, phosphorylated on multiple serine sites. Several of these sites are hormone-dependent. Phosphorylation on Ser-294 is highly hormone-dependent and modulates ubiquitination and sumoylation on Lys-388. Phosphorylation on Ser-345 also requires induction by hormone. Basal phosphorylation on Ser-162, Ser-190 and Ser-400 is increased in response to progesterone and can be phosphorylated in vitro by the CDK2-A1 complex. Increased levels of phosphorylation on Ser-400 also in the presence of EGF, heregulin, IGF, PMA and FBS. Phosphorylation at this site by CDK2 is ligand-independent, and increases nuclear translocation and transcriptional activity. Phosphorylation at Ser-162 and Ser-294, but not at Ser-190, is impaired during the G(2)/M phase of the cell cycle. Phosphorylation on Ser-345 by ERK1/2 MAPK is required for interaction with SP1. Post-translationally, sumoylation is hormone-dependent and represses transcriptional activity. Sumoylation on all three sites is enhanced by PIAS3. Desumoylated by SENP1. Sumoylation on Lys-388, the main site of sumoylation, is repressed by ubiquitination on the same site, and modulated by phosphorylation at Ser-294. Ubiquitination is hormone-dependent and represses sumoylation on the same site. Promoted by MAPK-mediated phosphorylation on Ser-294. Ubiquitinated by UBR5, leading to its degradation: UBR5 specifically recognizes and binds ligand-bound PGR when it is not associated with coactivators (NCOAs). In presence of NCOAs, the UBR5-degron is not accessible, preventing its ubiquitination and degradation. In terms of processing, palmitoylated by ZDHHC7 and ZDHHC21. Palmitoylation is required for plasma membrane targeting and for rapid intracellular signaling via ERK and AKT kinases and cAMP generation.

The protein resides in the nucleus. Its subcellular location is the cytoplasm. In terms of biological role, the steroid hormones and their receptors are involved in the regulation of eukaryotic gene expression and affect cellular proliferation and differentiation in target tissues. Transcriptional activator of several progesteron-dependent promoters in a variety of cell types. Involved in activation of SRC-dependent MAPK signaling on hormone stimulation. The sequence is that of Progesterone receptor (PGR) from Chlorocebus aethiops (Green monkey).